The following is a 279-amino-acid chain: Acetyl-coenzyme A carboxylase carboxyl transferase subunit beta (279 aa).

Positions 23 to 279 (LWSKCDECGA…LIKLFKHLRG (257 aa)) constitute a CoA carboxyltransferase N-terminal domain. 4 residues coordinate Zn(2+): Cys-27, Cys-30, Cys-46, and Cys-49. The C4-type zinc-finger motif lies at 27–49 (CDECGAALHKKQLEDHLYTCPEC).

The protein belongs to the AccD/PCCB family. As to quaternary structure, acetyl-CoA carboxylase is a heterohexamer composed of biotin carboxyl carrier protein (AccB), biotin carboxylase (AccC) and two subunits each of ACCase subunit alpha (AccA) and ACCase subunit beta (AccD). Zn(2+) is required as a cofactor.

The protein resides in the cytoplasm. It catalyses the reaction N(6)-carboxybiotinyl-L-lysyl-[protein] + acetyl-CoA = N(6)-biotinyl-L-lysyl-[protein] + malonyl-CoA. It functions in the pathway lipid metabolism; malonyl-CoA biosynthesis; malonyl-CoA from acetyl-CoA: step 1/1. In terms of biological role, component of the acetyl coenzyme A carboxylase (ACC) complex. Biotin carboxylase (BC) catalyzes the carboxylation of biotin on its carrier protein (BCCP) and then the CO(2) group is transferred by the transcarboxylase to acetyl-CoA to form malonyl-CoA. This is Acetyl-coenzyme A carboxylase carboxyl transferase subunit beta from Chlorobaculum parvum (strain DSM 263 / NCIMB 8327) (Chlorobium vibrioforme subsp. thiosulfatophilum).